Reading from the N-terminus, the 640-residue chain is Calpain-5 (640 aa).

The 318-residue stretch at 26–343 (LFEDPHFPAS…FTDIIKCRLI (318 aa)) folds into the Calpain catalytic domain. Catalysis depends on residues Cys-81, His-252, and Asn-284. The domain III stretch occupies residues 344–496 (NTSYLSIHKT…VFTDVPSNCR (153 aa)). Residues 499–617 (RLDEPPRTCW…HSLHLQDRSG (119 aa)) enclose the C2 domain.

It belongs to the peptidase C2 family.

Calcium-regulated non-lysosomal thiol-protease. This Rattus norvegicus (Rat) protein is Calpain-5 (Capn5).